Here is a 517-residue protein sequence, read N- to C-terminus: ATP synthase subunit alpha (517 aa).

173-180 (GDRQTGKT) provides a ligand contact to ATP.

It belongs to the ATPase alpha/beta chains family. As to quaternary structure, F-type ATPases have 2 components, CF(1) - the catalytic core - and CF(0) - the membrane proton channel. CF(1) has five subunits: alpha(3), beta(3), gamma(1), delta(1), epsilon(1). CF(0) has three main subunits: a(1), b(2) and c(9-12). The alpha and beta chains form an alternating ring which encloses part of the gamma chain. CF(1) is attached to CF(0) by a central stalk formed by the gamma and epsilon chains, while a peripheral stalk is formed by the delta and b chains.

Its subcellular location is the cell inner membrane. It catalyses the reaction ATP + H2O + 4 H(+)(in) = ADP + phosphate + 5 H(+)(out). Its function is as follows. Produces ATP from ADP in the presence of a proton gradient across the membrane. The alpha chain is a regulatory subunit. This chain is ATP synthase subunit alpha, found in Legionella pneumophila (strain Lens).